The sequence spans 407 residues: S-adenosylmethionine synthase (407 aa).

Residue H15 coordinates ATP. Residue D17 coordinates Mg(2+). E43 is a binding site for K(+). Residues E56 and Q100 each contribute to the L-methionine site. The interval 100-110 (QSPDIAQGVDE) is flexible loop. Residues 171–173 (DGK), 248–249 (KF), D257, 263–264 (RK), A280, and K284 contribute to the ATP site. D257 contributes to the L-methionine binding site. K288 is a binding site for L-methionine.

This sequence belongs to the AdoMet synthase family. In terms of assembly, homotetramer; dimer of dimers. The cofactor is Mg(2+). K(+) serves as cofactor.

The protein resides in the cytoplasm. It carries out the reaction L-methionine + ATP + H2O = S-adenosyl-L-methionine + phosphate + diphosphate. Its pathway is amino-acid biosynthesis; S-adenosyl-L-methionine biosynthesis; S-adenosyl-L-methionine from L-methionine: step 1/1. Catalyzes the formation of S-adenosylmethionine (AdoMet) from methionine and ATP. The overall synthetic reaction is composed of two sequential steps, AdoMet formation and the subsequent tripolyphosphate hydrolysis which occurs prior to release of AdoMet from the enzyme. The protein is S-adenosylmethionine synthase of Synechococcus sp. (strain RCC307).